The following is a 289-amino-acid chain: 4-diphosphocytidyl-2-C-methyl-D-erythritol kinase (289 aa).

Residue Lys-10 is part of the active site. Position 94–104 (94–104 (PVAAGLAGGSS)) interacts with ATP. Residue Asp-136 is part of the active site.

It belongs to the GHMP kinase family. IspE subfamily.

It catalyses the reaction 4-CDP-2-C-methyl-D-erythritol + ATP = 4-CDP-2-C-methyl-D-erythritol 2-phosphate + ADP + H(+). The protein operates within isoprenoid biosynthesis; isopentenyl diphosphate biosynthesis via DXP pathway; isopentenyl diphosphate from 1-deoxy-D-xylulose 5-phosphate: step 3/6. In terms of biological role, catalyzes the phosphorylation of the position 2 hydroxy group of 4-diphosphocytidyl-2C-methyl-D-erythritol. The sequence is that of 4-diphosphocytidyl-2-C-methyl-D-erythritol kinase from Geobacillus sp. (strain WCH70).